Here is a 170-residue protein sequence, read N- to C-terminus: Arginine repressor (170 aa).

This sequence belongs to the ArgR family.

Its subcellular location is the cytoplasm. It participates in amino-acid biosynthesis; L-arginine biosynthesis [regulation]. In terms of biological role, regulates arginine biosynthesis genes. The polypeptide is Arginine repressor (Bifidobacterium longum (strain NCC 2705)).